Reading from the N-terminus, the 402-residue chain is Propionate kinase (402 aa).

ATP is bound by residues Asn-11 and Lys-18. Asn-11 contributes to the Mg(2+) binding site. Arg-86 provides a ligand contact to substrate. The Proton donor/acceptor role is filled by Asp-143. Residues His-175, 203–207, 278–280, and 326–330 contribute to the ATP site; these read HLGNG, DLR, and GIGEN.

The protein belongs to the acetokinase family. TdcD subfamily. Homodimer. Mg(2+) is required as a cofactor.

The enzyme catalyses propanoate + ATP = propanoyl phosphate + ADP. Its pathway is amino-acid degradation; L-threonine degradation via propanoate pathway; propanoate from L-threonine: step 4/4. Functionally, catalyzes the conversion of propionyl phosphate and ADP to propionate and ATP. The sequence is that of Propionate kinase from Salmonella agona (strain SL483).